Consider the following 156-residue polypeptide: Protein E6 (156 aa).

2 zinc fingers span residues 42-78 and 115-151; these read CHYC…CSQC and CVRC…CVRC.

It belongs to the papillomaviridae E6 protein family. Forms homodimers. Interacts with ubiquitin-protein ligase UBE3A/E6-AP; this interaction stimulates UBE3A ubiquitin activity. Interacts with host BAK1.

The protein localises to the host cytoplasm. It localises to the host nucleus. Functionally, plays a major role in the induction and maintenance of cellular transformation. E6 associates with host UBE3A/E6-AP ubiquitin-protein ligase and modulates its activity. Protects host keratinocytes from apoptosis by mediating the degradation of host BAK1. May also inhibit host immune response. The protein is Protein E6 of Homo sapiens (Human).